The sequence spans 420 residues: Cyclin-B2-1 (420 aa).

Residues 1–61 are disordered; sequence MDRASENRRL…EKSGKEEQKP (61 aa). Residues 49–60 are compositionally biased toward basic and acidic residues; sequence PMLEKSGKEEQK.

It belongs to the cyclin family. Cyclin AB subfamily. In terms of assembly, interacts with CDKB2-1. In terms of tissue distribution, expressed in the root apices.

In terms of biological role, involved in the control of the cell cycle at the G2/M (mitosis) transition. May activate CDKB2-1 kinase. This Oryza sativa subsp. japonica (Rice) protein is Cyclin-B2-1 (CYCB2-1).